Reading from the N-terminus, the 342-residue chain is Cyclin pch1 (342 aa).

Residues 261 to 342 (LPIDQKNGSH…TDKEMETEAS (82 aa)) are disordered. The span at 278–314 (TPSSLASVSTQATPQHQNSSGRTDSFHSLNTETPSKS) shows a compositional bias: polar residues. Position 300 is a phosphothreonine (Thr300). At Ser302 the chain carries Phosphoserine. The span at 329–342 (KSSDTDKEMETEAS) shows a compositional bias: basic and acidic residues.

It belongs to the cyclin family. Cyclin C subfamily. Interacts with cdc2 protein kinase and with the N-terminal domain of cdk9.

Its subcellular location is the nucleus. Essential for progression through the whole cell cycle. The chain is Cyclin pch1 (pch1) from Schizosaccharomyces pombe (strain 972 / ATCC 24843) (Fission yeast).